Here is a 312-residue protein sequence, read N- to C-terminus: Serine/threonine-protein phosphatase PP2A catalytic subunit (312 aa).

The Mn(2+) site is built by Asp60, His62, Asp88, and Asn120. The active-site Proton donor is His121. Mn(2+)-binding residues include His170 and His244.

The protein belongs to the PPP phosphatase family. PP-2A subfamily. Mn(2+) is required as a cofactor.

It is found in the cytoplasm. It carries out the reaction O-phospho-L-seryl-[protein] + H2O = L-seryl-[protein] + phosphate. The enzyme catalyses O-phospho-L-threonyl-[protein] + H2O = L-threonyl-[protein] + phosphate. The chain is Serine/threonine-protein phosphatase PP2A catalytic subunit from Nicotiana tabacum (Common tobacco).